The following is a 320-amino-acid chain: Probable movement protein (320 aa).

Active-site residues include His-144, Asp-171, and Ser-199. Disordered stretches follow at residues 251–270 and 286–320; these read RRSR…QEKR and EFGR…GSSP.

This sequence belongs to the tobamoviruses movement protein family.

Functionally, may play a role in virus cell to cell movement by increasing the size exclusion limit of plasmodesmata and forming a complex with viral RNA to assist its movement. May also have a papain-like protease activity and cleave the genome polyprotein. The polypeptide is Probable movement protein (Malus sylvestris (European crab apple)).